Reading from the N-terminus, the 484-residue chain is Putative cysteine ligase BshC (484 aa).

Residues 372–435 (RAFRDRVEGL…AARDEVLARH (64 aa)) are a coiled coil.

Belongs to the BshC family.

The sequence is that of Putative cysteine ligase BshC from Thermus thermophilus (strain ATCC 27634 / DSM 579 / HB8).